The sequence spans 380 residues: Protein trichome birefringence-like 38 (380 aa).

Residues Ser7–Ala29 form a helical; Signal-anchor for type II membrane protein membrane-spanning segment. Residues Gly134–Ser136 carry the GDS motif motif. The short motif at Asp357–Asn371 is the DCXHWCLPGXXDXWN motif element.

The protein belongs to the PC-esterase family. TBL subfamily.

The protein localises to the membrane. In terms of biological role, may act as a bridging protein that binds pectin and other cell wall polysaccharides. Probably involved in maintaining esterification of pectins. May be involved in the specific O-acetylation of cell wall polymers. This is Protein trichome birefringence-like 38 (TBL38) from Arabidopsis thaliana (Mouse-ear cress).